Here is a 71-residue protein sequence, read N- to C-terminus: UPF0435 protein SERP1418 (71 aa).

The protein belongs to the UPF0435 family.

The sequence is that of UPF0435 protein SERP1418 from Staphylococcus epidermidis (strain ATCC 35984 / DSM 28319 / BCRC 17069 / CCUG 31568 / BM 3577 / RP62A).